Reading from the N-terminus, the 405-residue chain is Multifunctional CCA protein (405 aa).

ATP contacts are provided by G8 and R11. CTP contacts are provided by G8 and R11. Residues D21 and D23 each coordinate Mg(2+). Residues R91, R137, and R140 each coordinate ATP. 3 residues coordinate CTP: R91, R137, and R140. Positions 228 to 329 (TGIHSMMVLE…NDFLDKCDVW (102 aa)) constitute an HD domain.

The protein belongs to the tRNA nucleotidyltransferase/poly(A) polymerase family. Bacterial CCA-adding enzyme type 1 subfamily. In terms of assembly, monomer. Can also form homodimers and oligomers. Mg(2+) serves as cofactor. It depends on Ni(2+) as a cofactor.

It carries out the reaction a tRNA precursor + 2 CTP + ATP = a tRNA with a 3' CCA end + 3 diphosphate. The enzyme catalyses a tRNA with a 3' CCA end + 2 CTP + ATP = a tRNA with a 3' CCACCA end + 3 diphosphate. Its function is as follows. Catalyzes the addition and repair of the essential 3'-terminal CCA sequence in tRNAs without using a nucleic acid template. Adds these three nucleotides in the order of C, C, and A to the tRNA nucleotide-73, using CTP and ATP as substrates and producing inorganic pyrophosphate. tRNA 3'-terminal CCA addition is required both for tRNA processing and repair. Also involved in tRNA surveillance by mediating tandem CCA addition to generate a CCACCA at the 3' terminus of unstable tRNAs. While stable tRNAs receive only 3'-terminal CCA, unstable tRNAs are marked with CCACCA and rapidly degraded. This chain is Multifunctional CCA protein, found in Pseudoalteromonas atlantica (strain T6c / ATCC BAA-1087).